We begin with the raw amino-acid sequence, 397 residues long: Protein irld-34 (397 aa).

The polypeptide is Protein irld-34 (Caenorhabditis elegans).